The chain runs to 306 residues: Glutaminase (306 aa).

7 residues coordinate substrate: Ser-64, Asn-115, Glu-159, Asn-166, Tyr-190, Tyr-242, and Val-260.

Belongs to the glutaminase family. As to quaternary structure, homotetramer.

The catalysed reaction is L-glutamine + H2O = L-glutamate + NH4(+). This is Glutaminase from Aliivibrio fischeri (strain ATCC 700601 / ES114) (Vibrio fischeri).